Here is a 216-residue protein sequence, read N- to C-terminus: Probable nicotinate-nucleotide adenylyltransferase (216 aa).

It belongs to the NadD family.

The enzyme catalyses nicotinate beta-D-ribonucleotide + ATP + H(+) = deamido-NAD(+) + diphosphate. The protein operates within cofactor biosynthesis; NAD(+) biosynthesis; deamido-NAD(+) from nicotinate D-ribonucleotide: step 1/1. In terms of biological role, catalyzes the reversible adenylation of nicotinate mononucleotide (NaMN) to nicotinic acid adenine dinucleotide (NaAD). In Buchnera aphidicola subsp. Schizaphis graminum (strain Sg), this protein is Probable nicotinate-nucleotide adenylyltransferase.